The sequence spans 399 residues: Elongation factor Tu (399 aa).

Residues 10-209 (KPHVNIGTIG…EVDRYIPTPE (200 aa)) form the tr-type G domain. Positions 19-26 (GHVDHGKT) are G1. 19-26 (GHVDHGKT) contacts GTP. Residue T26 coordinates Mg(2+). Residues 60 to 64 (GITIA) form a G2 region. A G3 region spans residues 81 to 84 (DCPG). GTP is bound by residues 81 to 85 (DCPGH) and 136 to 139 (NKED). The interval 136–139 (NKED) is G4. Positions 174 to 176 (SAL) are G5.

Belongs to the TRAFAC class translation factor GTPase superfamily. Classic translation factor GTPase family. EF-Tu/EF-1A subfamily. Monomer.

Its subcellular location is the cytoplasm. It carries out the reaction GTP + H2O = GDP + phosphate + H(+). Functionally, GTP hydrolase that promotes the GTP-dependent binding of aminoacyl-tRNA to the A-site of ribosomes during protein biosynthesis. The sequence is that of Elongation factor Tu from Wolinella succinogenes (strain ATCC 29543 / DSM 1740 / CCUG 13145 / JCM 31913 / LMG 7466 / NCTC 11488 / FDC 602W) (Vibrio succinogenes).